The following is a 119-amino-acid chain: Large ribosomal subunit protein bL20 (119 aa).

It belongs to the bacterial ribosomal protein bL20 family.

Its function is as follows. Binds directly to 23S ribosomal RNA and is necessary for the in vitro assembly process of the 50S ribosomal subunit. It is not involved in the protein synthesizing functions of that subunit. The protein is Large ribosomal subunit protein bL20 of Listeria innocua serovar 6a (strain ATCC BAA-680 / CLIP 11262).